A 351-amino-acid polypeptide reads, in one-letter code: Cytoplasmic dynein 2 light intermediate chain 1 (351 aa).

This sequence belongs to the dynein light intermediate chain family. As to quaternary structure, light intermediate chain of the cytoplasmic dynein complex 2, a multisubunit complex composed at least of eleven different proteins. The cytoplasmic dynein 2 complex consists of two catalytic heavy chains (HCs) and a number of non-catalytic subunits presented by intermediate chains (ICs), light intermediate chains (LICs) and light chains (LCs). Among them, a heavy chain (DYNC2H1), two intermediate chains (DYNC2I2 and DYNC2I1), a light intermediate chain (DYNC2LI1), and a light chain (DYNLT2B) are unique to the dynein-2 complex, but a subset of light chains are also shared by dynein-1 and dynein-2 complexes. Dynein-2 complex is built around two copies of cytoplasmic dynein 2 heavy chain 1 (DYNC2H1). The C-terminal region of DYNC2H1 forms the motor domain, which converts the energy from ATP hydrolysis into movement. Its N-terminal region forms the tail, an extended structure that binds the other subunits and holds the two heavy chains in a homodimer. Interacts with DYNC2H1 (via N-terminus); this interaction stabilizes the dynein-2 complex structure. In terms of tissue distribution, expressed in bone, brain, kidney, and cartilage. Lower expression in heart, liver, lung, placenta and thymus.

The protein localises to the golgi apparatus. Its subcellular location is the cytoplasm. It is found in the cell projection. The protein resides in the cilium. It localises to the cytoskeleton. The protein localises to the cilium basal body. Its subcellular location is the cilium axoneme. It is found in the microtubule organizing center. The protein resides in the centrosome. Its function is as follows. Acts as one of several non-catalytic accessory components of the cytoplasmic dynein 2 complex (dynein-2 complex), a motor protein complex that drives the movement of cargos along microtubules within cilia and flagella in concert with the intraflagellar transport (IFT) system, facilitating the assembly of these organelles. Involved in the regulation of ciliary length. The chain is Cytoplasmic dynein 2 light intermediate chain 1 (DYNC2LI1) from Homo sapiens (Human).